A 91-amino-acid polypeptide reads, in one-letter code: uncharacterized protein (91 aa).

Positions 71–91 (NRENNSRSSVKQIINQETEEE) are disordered. The span at 76–91 (SRSSVKQIINQETEEE) shows a compositional bias: polar residues.

This is an uncharacterized protein from Bacillus subtilis (strain 168).